The primary structure comprises 100 residues: Integration host factor subunit alpha (100 aa).

The protein belongs to the bacterial histone-like protein family. As to quaternary structure, heterodimer of an alpha and a beta chain.

Functionally, this protein is one of the two subunits of integration host factor, a specific DNA-binding protein that functions in genetic recombination as well as in transcriptional and translational control. The protein is Integration host factor subunit alpha (ihfA) of Zymomonas mobilis subsp. mobilis (strain ATCC 31821 / ZM4 / CP4).